Consider the following 345-residue polypeptide: MNINEILKKLINKSDLEINEAEELAKAIIRGEVPEILVSAILVALRMKGESKNEIVGFARAMRELAIKIDVPNAIDTAGTGGDGLGTVNVSTASAILLSLVNPVAKHGNRAVSGKSGSADVLEALGYNIIVPPERAKELVNKTNFVFLFAQYYHPAMKNVANVRKTLGIRTIFNILGPLTNPANAKYQLMGVFSKDHLDLLSKSAYELDFNKIILVYGEPGIDEVSPIGNTFMKIVSKRGIEEVKLNVTDFGISPIPIEKLIVNSAEDSAIKIVRAFLGKDEHVAEFIKINTAVALFALDRVGDFREGYEYADHLIEKSLDKLNEIISMNGDVTKLKTIVVKSSG.

5-phospho-alpha-D-ribose 1-diphosphate contacts are provided by residues 77 to 79 (TAG), 82 to 83 (GD), T87, 89 to 92 (NVST), 106 to 114 (KHGNRAVSG), and S118. G79 contributes to the anthranilate binding site. Residue S91 coordinates Mg(2+). An anthranilate-binding site is contributed by N109. Residue R164 participates in anthranilate binding. 2 residues coordinate Mg(2+): D223 and E224.

This sequence belongs to the anthranilate phosphoribosyltransferase family. As to quaternary structure, homodimer. Requires Mg(2+) as cofactor.

It catalyses the reaction N-(5-phospho-beta-D-ribosyl)anthranilate + diphosphate = 5-phospho-alpha-D-ribose 1-diphosphate + anthranilate. The protein operates within amino-acid biosynthesis; L-tryptophan biosynthesis; L-tryptophan from chorismate: step 2/5. Catalyzes the transfer of the phosphoribosyl group of 5-phosphorylribose-1-pyrophosphate (PRPP) to anthranilate to yield N-(5'-phosphoribosyl)-anthranilate (PRA). This chain is Anthranilate phosphoribosyltransferase, found in Saccharolobus solfataricus (strain ATCC 35092 / DSM 1617 / JCM 11322 / P2) (Sulfolobus solfataricus).